Consider the following 211-residue polypeptide: Ribonuclease HII (211 aa).

The region spanning 2–211 (MLILGVDEAG…TAQRLKASSV (210 aa)) is the RNase H type-2 domain. Residues Asp8, Glu9, and Asp106 each coordinate a divalent metal cation.

It belongs to the RNase HII family. Mn(2+) serves as cofactor. It depends on Mg(2+) as a cofactor.

The protein resides in the cytoplasm. It carries out the reaction Endonucleolytic cleavage to 5'-phosphomonoester.. In terms of biological role, endonuclease that specifically degrades the RNA of RNA-DNA hybrids. In Methanothrix thermoacetophila (strain DSM 6194 / JCM 14653 / NBRC 101360 / PT) (Methanosaeta thermophila), this protein is Ribonuclease HII.